A 267-amino-acid polypeptide reads, in one-letter code: Tryptophan synthase alpha chain (267 aa).

Active-site proton acceptor residues include Glu43 and Asp54.

This sequence belongs to the TrpA family. In terms of assembly, tetramer of two alpha and two beta chains.

It carries out the reaction (1S,2R)-1-C-(indol-3-yl)glycerol 3-phosphate + L-serine = D-glyceraldehyde 3-phosphate + L-tryptophan + H2O. It participates in amino-acid biosynthesis; L-tryptophan biosynthesis; L-tryptophan from chorismate: step 5/5. Functionally, the alpha subunit is responsible for the aldol cleavage of indoleglycerol phosphate to indole and glyceraldehyde 3-phosphate. The sequence is that of Tryptophan synthase alpha chain from Bacillus subtilis (strain 168).